A 734-amino-acid chain; its full sequence is Photosystem I P700 chlorophyll a apoprotein A2 (734 aa).

A run of 8 helical transmembrane segments spans residues 46–69 (IFAS…FHVA), 135–158 (LYTG…LHLQ), 175–199 (LNHH…HVAI), 273–291 (MAHH…GHMY), 330–353 (LHMQ…QHMY), 369–395 (ASLY…IFFV), 417–439 (AIIS…LYVH), and 517–535 (FLVH…LILV). The [4Fe-4S] cluster site is built by Cys-559 and Cys-568. 2 consecutive transmembrane segments (helical) span residues 575-596 (AFYL…YWHW) and 643-665 (LSVW…MFLI). Positions 654, 662, and 670 each coordinate chlorophyll a. Trp-671 provides a ligand contact to phylloquinone. Residues 707–727 (LVGLAHFSVGYVLTYAAFVLA) form a helical membrane-spanning segment.

The protein belongs to the PsaA/PsaB family. As to quaternary structure, the PsaA/B heterodimer binds the P700 chlorophyll special pair and subsequent electron acceptors. PSI consists of a core antenna complex that captures photons, and an electron transfer chain that converts photonic excitation into a charge separation. The eukaryotic PSI reaction center is composed of at least 11 subunits. It depends on P700 is a chlorophyll a/chlorophyll a' dimer, A0 is one or more chlorophyll a, A1 is one or both phylloquinones and FX is a shared 4Fe-4S iron-sulfur center. as a cofactor.

The protein resides in the plastid. The protein localises to the chloroplast thylakoid membrane. The catalysed reaction is reduced [plastocyanin] + hnu + oxidized [2Fe-2S]-[ferredoxin] = oxidized [plastocyanin] + reduced [2Fe-2S]-[ferredoxin]. Functionally, psaA and PsaB bind P700, the primary electron donor of photosystem I (PSI), as well as the electron acceptors A0, A1 and FX. PSI is a plastocyanin/cytochrome c6-ferredoxin oxidoreductase, converting photonic excitation into a charge separation, which transfers an electron from the donor P700 chlorophyll pair to the spectroscopically characterized acceptors A0, A1, FX, FA and FB in turn. Oxidized P700 is reduced on the lumenal side of the thylakoid membrane by plastocyanin or cytochrome c6. The chain is Photosystem I P700 chlorophyll a apoprotein A2 from Porphyra purpurea (Red seaweed).